The primary structure comprises 168 residues: Nicotinamide-nucleotide adenylyltransferase (168 aa).

It belongs to the archaeal NMN adenylyltransferase family.

The protein localises to the cytoplasm. The catalysed reaction is beta-nicotinamide D-ribonucleotide + ATP + H(+) = diphosphate + NAD(+). The protein operates within cofactor biosynthesis; NAD(+) biosynthesis; NAD(+) from nicotinamide D-ribonucleotide: step 1/1. This is Nicotinamide-nucleotide adenylyltransferase from Methanosphaerula palustris (strain ATCC BAA-1556 / DSM 19958 / E1-9c).